Here is a 47-residue protein sequence, read N- to C-terminus: Large ribosomal subunit protein bL34 (47 aa).

Basic residues-rich tracts occupy residues 1–22 (MAKG…HGFR) and 36–47 (ARRRKGRKSLTA). Residues 1 to 47 (MAKGKRTFQPNNRRRSRVHGFRSRMSTRAGRAIVSARRRKGRKSLTA) are disordered.

The protein belongs to the bacterial ribosomal protein bL34 family.

In Corynebacterium kroppenstedtii (strain DSM 44385 / JCM 11950 / CIP 105744 / CCUG 35717), this protein is Large ribosomal subunit protein bL34.